Here is a 121-residue protein sequence, read N- to C-terminus: Large ribosomal subunit protein uL14 (121 aa).

Belongs to the universal ribosomal protein uL14 family. Part of the 50S ribosomal subunit. Forms a cluster with proteins L3 and L19. In the 70S ribosome, L14 and L19 interact and together make contacts with the 16S rRNA in bridges B5 and B8.

Binds to 23S rRNA. Forms part of two intersubunit bridges in the 70S ribosome. The polypeptide is Large ribosomal subunit protein uL14 (Parabacteroides distasonis (strain ATCC 8503 / DSM 20701 / CIP 104284 / JCM 5825 / NCTC 11152)).